The following is a 142-amino-acid chain: MKTFTAKPETVKRDWYVVDAAGQTLGRLATEIASRLRGKHKPEYTPHVDTGDYIVVINAEQVRVTGAKSSDKIYYSHSGFPGGIKSISFEKLIAKAPERVIETAVKGMLPKNPLGRDMYRKLKVYKGAVHPHTAQQPQELKI.

It belongs to the universal ribosomal protein uL13 family. In terms of assembly, part of the 50S ribosomal subunit.

Its function is as follows. This protein is one of the early assembly proteins of the 50S ribosomal subunit, although it is not seen to bind rRNA by itself. It is important during the early stages of 50S assembly. The protein is Large ribosomal subunit protein uL13 of Azotobacter vinelandii (strain DJ / ATCC BAA-1303).